A 283-amino-acid polypeptide reads, in one-letter code: Diaminopimelate epimerase (283 aa).

Substrate is bound by residues Asn13 and Asn66. Residue Cys75 is the Proton donor of the active site. Residues 76–77, Asn165, Asn198, and 216–217 contribute to the substrate site; these read GN and ER. Cys225 functions as the Proton acceptor in the catalytic mechanism. Substrate is bound at residue 226 to 227; that stretch reads GT.

The protein belongs to the diaminopimelate epimerase family. As to quaternary structure, homodimer.

Its subcellular location is the cytoplasm. It catalyses the reaction (2S,6S)-2,6-diaminopimelate = meso-2,6-diaminopimelate. It functions in the pathway amino-acid biosynthesis; L-lysine biosynthesis via DAP pathway; DL-2,6-diaminopimelate from LL-2,6-diaminopimelate: step 1/1. Functionally, catalyzes the stereoinversion of LL-2,6-diaminopimelate (L,L-DAP) to meso-diaminopimelate (meso-DAP), a precursor of L-lysine and an essential component of the bacterial peptidoglycan. The polypeptide is Diaminopimelate epimerase (Acaryochloris marina (strain MBIC 11017)).